The primary structure comprises 754 residues: Nibrin (754 aa).

Residues 24-83 enclose the FHA domain; that stretch reads YVVGRKNCAILIENDQSISRNHAVLTANFSVTNLSQTDEIPVLTLKDNSKYGTFVNEEKM. BRCT domains lie at 105–181 and 224–315; these read KFRI…TEFL and GKTF…LAVI. A mediates interaction with SP100 region spans residues 111-328; it reads EPLVACSSCL…TKNYCDPQGH (218 aa). The segment at 221 to 402 is interaction with MTOR, MAPKAP1 and RICTOR; sequence IFKGKTFIFL…FRMLSQDAPT (182 aa). Ser-278 is subject to Phosphoserine; by ATM. Positions 326–346 are disordered; that stretch reads QGHPSTGLKTTTPGPSLSQGV. The span at 328–346 shows a compositional bias: polar residues; it reads HPSTGLKTTTPGPSLSQGV. Thr-337 is modified (phosphothreonine). Ser-343 is modified (phosphoserine; by ATM). Ser-347 is subject to Phosphoserine. The residue at position 388 (Lys-388) is an N6-lactoyllysine. Disordered stretches follow at residues 396–415 and 430–478; these read LSQD…NNNS and QLSP…MSSC. Phosphoserine is present on Ser-397. Thr-402 carries the post-translational modification Phosphothreonine. Composition is skewed to polar residues over residues 430 to 440 and 447 to 462; these read QLSPTKLPSIN and SQQQ…FQPS. Phosphoserine; by CDK2 is present on Ser-432. Lys-435 participates in a covalent cross-link: Glycyl lysine isopeptide (Lys-Gly) (interchain with G-Cter in ubiquitin). The short motif at 461–467 is the Nuclear localization signal element; sequence PSTKKRE. Residues Ser-509 and Ser-518 each carry the phosphoserine modification. Residues Lys-529, Lys-571, and Lys-582 each participate in a glycyl lysine isopeptide (Lys-Gly) (interchain with G-Cter in SUMO2) cross-link. Residues Ser-615 and Ser-673 each carry the phosphoserine modification. Residues Lys-686, Lys-690, and Lys-735 each participate in a glycyl lysine isopeptide (Lys-Gly) (interchain with G-Cter in ubiquitin) cross-link. Residues 740 to 749 carry the FxF/Y motif motif; the sequence is ADDLFRYNPY.

Belongs to the Nibrin family. In terms of assembly, component of the MRN complex composed of two heterodimers RAD50 and MRE11 associated with a single NBN. The MRN complexes dimerize on DNA to form joined MRN-MRN oligomers required for DNA double-strand break repair. As part of the MRN complex, interacts with MCM9; the interaction recruits the complex to DNA repair sites. Component of the BASC complex, at least composed of BRCA1, MSH2, MSH6, MLH1, ATM, BLM, RAD50, MRE11 and NBN. Interacts with histone H2AX; this requires phosphorylation of H2AX on 'Ser-139' and promotes NBN recruitment to DNA damage sites. Interacts with (phosphorylated) MDC1; promoting NBN recruitment to DNA damage sites. Interacts with (phosphorylated) RAD17; promoting NBN recruitment to DNA damage sites. Interacts (via FxF/Y motif) with ATM. Interacts with HJURP. Interacts with INTS3. Interacts with KPNA2. Interacts with TERF2; interaction is disrupted upon NBN phosphorylation by CDK2. Interacts with (phosphorylated) RBBP8/CtIP; the interaction links the role of the MRN complex in DNA double-strand break sensing to resection. Interacts with SP100; recruits NBN to PML bodies. Interacts with ATF2. Interacts with MTOR, MAPKAP1 isoform 2 and RICTOR; indicative for an association with the mTORC2 complex. Interacts with MRNIP. Interacts with UFL1; promoting UFL1 recruitment to double-strand breaks following DNA damage. Interacts with CYREN (via XLF motif). (Microbial infection) Interacts with herpes simplex virus 1 protein UL12. In terms of processing, phosphorylated by ATM in response of ionizing radiation, and such phosphorylation is responsible intra-S phase checkpoint control and telomere maintenance. Phosphorylated at Ser-432 by CDK2 in S/G2 phases abolishes interaction with TERF2, enabling DCLRE1B/Apollo recruitment to telomeres. Phosphorylation at Ser-432 in response to dysfunctional telomeres promotes non-homologous end joining repair at telomeres, while dephosphorylation by PPP1CA promotes microhomology-mediated end-joining (MMEJ) repair. Ubiquitinated at Lys-435 via 'Lys-6'-linked ubiquitin chains by RNF8, promoting NBN recruitment to DNA double-strand breaks (DSBs). Ubiquitinated at Lys-686 and Lys-689 via 'Lys-63'-linked ubiquitin chains by PELI1: ubiquitination takes place following PELI1 phosphorylation and promotes ATM activation and DNA repair. Ubiquitinated at Lys-735 via 'Lys-63'-linked ubiquitin chains by the SCF(SKP2) complex: ubiquitination takes place following SKP2 phosphorylation and promotes ATM activation and DNA repair. Post-translationally, lactylation at Lys-388 by KAT5 in response to DNA damage promotes recruitment of the MRN complex to DNA damage sites. Delactylated by HDAC3. In terms of tissue distribution, ubiquitous. Expressed at high levels in testis.

It localises to the nucleus. The protein resides in the chromosome. It is found in the PML body. The protein localises to the telomere. Functionally, component of the MRN complex, which plays a central role in double-strand break (DSB) repair, DNA recombination, maintenance of telomere integrity and meiosis. The MRN complex is involved in the repair of DNA double-strand breaks (DSBs) via homologous recombination (HR), an error-free mechanism which primarily occurs during S and G2 phases. The complex (1) mediates the end resection of damaged DNA, which generates proper single-stranded DNA, a key initial steps in HR, and is (2) required for the recruitment of other repair factors and efficient activation of ATM and ATR upon DNA damage. The MRN complex possesses single-strand endonuclease activity and double-strand-specific 3'-5' exonuclease activity, which are provided by MRE11, to initiate end resection, which is required for single-strand invasion and recombination. Within the MRN complex, NBN acts as a protein-protein adapter, which specifically recognizes and binds phosphorylated proteins, promoting their recruitment to DNA damage sites. Recruits MRE11 and RAD50 components of the MRN complex to DSBs in response to DNA damage. Promotes the recruitment of PI3/PI4-kinase family members ATM, ATR, and probably DNA-PKcs to the DNA damage sites, activating their functions. Mediates the recruitment of phosphorylated RBBP8/CtIP to DSBs, leading to cooperation between the MRN complex and RBBP8/CtIP to initiate end resection. RBBP8/CtIP specifically promotes the endonuclease activity of the MRN complex to clear DNA ends containing protein adducts. The MRN complex is also required for the processing of R-loops. NBN also functions in telomere length maintenance via its interaction with TERF2: interaction with TERF2 during G1 phase preventing recruitment of DCLRE1B/Apollo to telomeres. NBN also promotes DNA repair choice at dysfunctional telomeres: NBN phosphorylation by CDK2 promotes non-homologous end joining repair at telomeres, while unphosphorylated NBN promotes microhomology-mediated end-joining (MMEJ) repair. Enhances AKT1 phosphorylation possibly by association with the mTORC2 complex. The protein is Nibrin of Homo sapiens (Human).